Here is a 140-residue protein sequence, read N- to C-terminus: Nucleoside diphosphate kinase (140 aa).

Residues lysine 11, phenylalanine 59, arginine 87, threonine 93, arginine 104, and asparagine 114 each contribute to the ATP site. Histidine 117 functions as the Pros-phosphohistidine intermediate in the catalytic mechanism.

This sequence belongs to the NDK family. In terms of assembly, homotetramer. Mg(2+) serves as cofactor.

The protein localises to the cytoplasm. It catalyses the reaction a 2'-deoxyribonucleoside 5'-diphosphate + ATP = a 2'-deoxyribonucleoside 5'-triphosphate + ADP. The catalysed reaction is a ribonucleoside 5'-diphosphate + ATP = a ribonucleoside 5'-triphosphate + ADP. Its function is as follows. Major role in the synthesis of nucleoside triphosphates other than ATP. The ATP gamma phosphate is transferred to the NDP beta phosphate via a ping-pong mechanism, using a phosphorylated active-site intermediate. This is Nucleoside diphosphate kinase from Francisella tularensis subsp. holarctica (strain LVS).